Here is a 395-residue protein sequence, read N- to C-terminus: Succinyl-diaminopimelate desuccinylase 2 (395 aa).

Zn(2+) is bound at residue H79. Residue D81 is part of the active site. D112 is a binding site for Zn(2+). Residue E145 is the Proton acceptor of the active site. E146, E174, and H363 together coordinate Zn(2+).

This sequence belongs to the peptidase M20A family. DapE subfamily. As to quaternary structure, homodimer. Zn(2+) is required as a cofactor. Co(2+) serves as cofactor.

It catalyses the reaction N-succinyl-(2S,6S)-2,6-diaminopimelate + H2O = (2S,6S)-2,6-diaminopimelate + succinate. It functions in the pathway amino-acid biosynthesis; L-lysine biosynthesis via DAP pathway; LL-2,6-diaminopimelate from (S)-tetrahydrodipicolinate (succinylase route): step 3/3. In terms of biological role, catalyzes the hydrolysis of N-succinyl-L,L-diaminopimelic acid (SDAP), forming succinate and LL-2,6-diaminopimelate (DAP), an intermediate involved in the bacterial biosynthesis of lysine and meso-diaminopimelic acid, an essential component of bacterial cell walls. The protein is Succinyl-diaminopimelate desuccinylase 2 of Ruegeria sp. (strain TM1040) (Silicibacter sp.).